A 189-amino-acid chain; its full sequence is uncharacterized protein (189 aa).

The first 23 residues, 1 to 23 (MVPPKPALWALLLALLGTAPSRA), serve as a signal peptide directing secretion. N-linked (GlcNAc...) asparagine glycosylation is present at asparagine 72.

This is an uncharacterized protein from Homo sapiens (Human).